The sequence spans 118 residues: Endoribonuclease MazF9 (118 aa).

Belongs to the PemK/MazF family. As to quaternary structure, forms a complex with cognate antitoxin MazE9.

Its function is as follows. Toxic component of a type II toxin-antitoxin (TA) system. Upon expression in E.coli and M.smegmatis inhibits cell growth and colony formation. Its toxic effect is neutralized by coexpression with cognate antitoxin MazE9. Acts as an mRNA interferase, specifically cleaving between U and C in UAC sequences. May cleave its cognate antitoxin's gene. In E.coli expression with non-cognate antitoxins VapB27 and VapB40 partially neutralizes the toxin. In Mycobacterium tuberculosis (strain ATCC 25618 / H37Rv), this protein is Endoribonuclease MazF9 (mazF9).